We begin with the raw amino-acid sequence, 185 residues long: MGLKADCWIRQKAVEDGMIEPFCEDQIGKGVVSYGLSSYGYDIRVSDEFKIFTNVNAEVVDPKHFDERNVVDFKGDVCIVPPNSFALARTVEYFRIPRNVLAICVGKSTYARCGIIVNVTPFEPEFEGHITIEISNTTPLPAKIYANEGIAQVLFFEGDEDCEVSYKDKRGKYQHQRGITLPKIL.

Residue 107–112 participates in dCTP binding; it reads KSTYAR. Glu133 serves as the catalytic Proton donor/acceptor. 3 residues coordinate dCTP: Gln152, Tyr166, and Gln176.

This sequence belongs to the dCTP deaminase family. Homotrimer.

It carries out the reaction dCTP + H2O + H(+) = dUTP + NH4(+). The protein operates within pyrimidine metabolism; dUMP biosynthesis; dUMP from dCTP (dUTP route): step 1/2. In terms of biological role, catalyzes the deamination of dCTP to dUTP. The polypeptide is dCTP deaminase (Nitratiruptor sp. (strain SB155-2)).